Consider the following 170-residue polypeptide: M-agglutinin (170 aa).

Residues 1–24 form the signal peptide; sequence MNLKKIAIASSVFAGITMALTCHA.

This protein is a non-fimbrial hemagglutinin that is specific for blood group M. The chain is M-agglutinin (bmaE) from Escherichia coli.